A 427-amino-acid polypeptide reads, in one-letter code: BRO1 domain-containing protein BROX homolog (427 aa).

Positions 1–427 constitute a BRO1 domain; that stretch reads MSHWFHRNPI…PSNSSGCVIA (427 aa).

The protein belongs to the BROX family.

In Caenorhabditis elegans, this protein is BRO1 domain-containing protein BROX homolog.